Here is a 1345-residue protein sequence, read N- to C-terminus: DNA-directed RNA polymerase subunit beta (1345 aa).

The protein belongs to the RNA polymerase beta chain family. The RNAP catalytic core consists of 2 alpha, 1 beta, 1 beta' and 1 omega subunit. When a sigma factor is associated with the core the holoenzyme is formed, which can initiate transcription.

It carries out the reaction RNA(n) + a ribonucleoside 5'-triphosphate = RNA(n+1) + diphosphate. Functionally, DNA-dependent RNA polymerase catalyzes the transcription of DNA into RNA using the four ribonucleoside triphosphates as substrates. This is DNA-directed RNA polymerase subunit beta from Shewanella oneidensis (strain ATCC 700550 / JCM 31522 / CIP 106686 / LMG 19005 / NCIMB 14063 / MR-1).